We begin with the raw amino-acid sequence, 188 residues long: Proline-rich protein 3 (188 aa).

The tract at residues 1–157 (MPKRKKQNHH…DPQVMEDKSD (157 aa)) is disordered. 2 stretches are compositionally biased toward pro residues: residues 35–46 (IGPPSLLGPPPM) and 69–82 (LIPP…PPWG). A compositionally biased stretch (low complexity) spans 83–96 (RGPIRRGLGPRSSP). The segment covering 145–157 (PKDDPQVMEDKSD) has biased composition (basic and acidic residues). A C3H1-type zinc finger spans residues 155-183 (KSDRPVCRHFAKKGHCRYEDLCAFYHPGV).

This is Proline-rich protein 3 (PRR3) from Homo sapiens (Human).